The following is a 61-amino-acid chain: MAKCFITGKKKSFGNTRSHAMNASRRDWKANLQKVRILVDGKPKRVWVSARALKSGKVKRV.

The protein belongs to the bacterial ribosomal protein bL28 family.

The sequence is that of Large ribosomal subunit protein bL28 (rpmB) from Geobacillus stearothermophilus (Bacillus stearothermophilus).